The chain runs to 931 residues: Short transient receptor potential channel 6 (931 aa).

Residues 1 to 24 (MNQSPAAFGPRRGGSPAVVAGAGA) are disordered. Topologically, residues 1-406 (MNQSPAAFGP…GLRQQTMAVK (406 aa)) are cytoplasmic. Residues 13–24 (GGSPAVVAGAGA) show a composition bias toward low complexity. ANK repeat units follow at residues 131-160 (MGQNALQLAVANEHLEITELLLKKENLSRV), 162-188 (DALLLAISKGYVRIVEAILSHPAFAEG), and 217-246 (HDVTPIILAAHCQEYEIVHTLLRKGARIER). The helical transmembrane segment at 407–427 (FLVVLAVAVGLPFLALVYWFA) threads the bilayer. Over 428-438 (PCSKMGKIMRG) the chain is Extracellular. The chain crosses the membrane as a helical span at residues 439–459 (PFMKFVAHAASFTIFLGLLVM). At 460–487 (NAADRFEGTKILPNETSTDHAKQLFRMK) the chain is on the cytoplasmic side. Residues 488 to 508 (TSCFSWMEMLIISWVIGMIWA) form a helical membrane-spanning segment. Residues 509–521 (ECKEIWTQGPKEY) are Extracellular-facing. Residues 522–542 (LFELWNMLDFGMLAIFAASFI) form a helical membrane-spanning segment. Residues 543 to 592 (ARFMAFWHASKAQSIIDANDTLKDLTKVTLGDNVKYYNLARIKWDPSDPQ) are Cytoplasmic-facing. The helical transmembrane segment at 593–613 (IISEGLYAIAVVLSFSRIAYI) threads the bilayer. Over 614 to 636 (LPANESFGPLQISLGRTVKDIFK) the chain is Extracellular. N617 is a glycosylation site (N-linked (GlcNAc...) asparagine). The stretch at 618–647 (ESFGPLQISLGRTVKDIFKFMVIFIMVFVA) is one ANK 4 repeat. The helical transmembrane segment at 637-657 (FMVIFIMVFVAFMIGMFNLYS) threads the bilayer. Over 658 to 674 (YYIGAKQNEAFTTVEES) the chain is Cytoplasmic. The chain crosses the membrane as a helical span at residues 675 to 695 (FKTLFWAIFGLSEVKSVVINY). Topologically, residues 696–706 (NHKFIENIGYV) are extracellular. Residues 707 to 727 (LYGVYNVTMVIVLLNMLIAMI) form a helical membrane-spanning segment. The Cytoplasmic portion of the chain corresponds to 728-931 (NSSFQEIEDD…MEPNQEESNR (204 aa)). S815 is modified (phosphoserine).

Belongs to the transient receptor (TC 1.A.4) family. STrpC subfamily. TRPC6 sub-subfamily. In terms of assembly, homodimer; forms channel complex. Interacts with MX1 and RNF24. Phosphorylated by FYN, leading to an increase of TRPC6 channel activity.

It localises to the cell membrane. It carries out the reaction Ca(2+)(in) = Ca(2+)(out). Thought to form a receptor-activated non-selective calcium permeant cation channel. Probably is operated by a phosphatidylinositol second messenger system activated by receptor tyrosine kinases or G-protein coupled receptors. Activated by diacylglycerol (DAG) in a membrane-delimited fashion, independently of protein kinase C. Seems not to be activated by intracellular calcium store depletion. The chain is Short transient receptor potential channel 6 from Bos taurus (Bovine).